Here is a 467-residue protein sequence, read N- to C-terminus: Zinc finger and BTB domain-containing protein 43 (467 aa).

M1 bears the N-acetylmethionine mark. Residues 33 to 97 enclose the BTB domain; it reads CDVSIVVQGH…SYTGRLVMPA (65 aa). 2 disordered regions span residues 134–153 and 162–225; these read LNHG…GLVE and HTDF…SAEF. Basic and acidic residues-rich tracts occupy residues 164 to 174 and 182 to 194; these read DFPKAQELRDG and KDEL…EHEY. Residues K182, K241, K247, K297, and K358 each participate in a glycyl lysine isopeptide (Lys-Gly) (interchain with G-Cter in SUMO2) cross-link. The segment at 373–394 adopts a C2H2-type 1; atypical zinc-finger fold; sequence YPCQCGKSFTHKSQRDRHMSMH. The C2H2-type 2 zinc finger occupies 400–422; the sequence is YGCGVCGKKFKMKHHLVGHMKIH. The residue at position 423 (T423) is a Phosphothreonine. A C2H2-type 3; atypical zinc finger spans residues 428 to 450; that stretch reads YECNICAKRFMWRDSFHRHVTSC. Residue K458 forms a Glycyl lysine isopeptide (Lys-Gly) (interchain with G-Cter in SUMO2) linkage.

The protein belongs to the krueppel C2H2-type zinc-finger protein family. In terms of assembly, interacts with BDP1.

The protein resides in the nucleus. Functionally, may be involved in transcriptional regulation. This is Zinc finger and BTB domain-containing protein 43 (ZBTB43) from Homo sapiens (Human).